The chain runs to 781 residues: ATP-dependent RNA helicase rok1 (781 aa).

Disordered regions lie at residues 7–108 (LSRG…KPKL) and 134–177 (QDEA…IYPQ). Over residues 48 to 57 (KRGKKRKRKG) the composition is skewed to basic residues. Positions 66 to 75 (SGDEDDDASD) are enriched in acidic residues. 2 stretches are compositionally biased toward basic and acidic residues: residues 84–108 (TPEE…KPKL) and 139–173 (TEEK…DKKQ). The Q motif signature appears at 184–212 (ELKYTYGIHPVLADNITRQGFRVPTEVQM). The Helicase ATP-binding domain occupies 233–487 (DVKVEKGIDF…TKHIDKRAKR (255 aa)). An ATP-binding site is contributed by 246–253 (APTGSGKT). The tract at residues 323–386 (ESNEQEETEQ…SRAKGDQKFK (64 aa)) is disordered. Acidic residues predominate over residues 339–369 (QDSDSDSEAESEPEEVMKIDEEEEEEEESDS). A compositionally biased stretch (basic and acidic residues) spans 370 to 386 (DAEKKTESRAKGDQKFK). Positions 434 to 437 (DEAD) match the DEAD box motif. The region spanning 527–689 (ALRQLLHPVS…GKDIDEKDTV (163 aa)) is the Helicase C-terminal domain. The interval 718–781 (RGVESRRTGG…KAEEEWTGLD (64 aa)) is disordered. Residues 736–752 (SWERRRENNRREAIEAS) are compositionally biased toward basic and acidic residues.

It belongs to the DEAD box helicase family. DDX52/ROK1 subfamily. Interacts with the U3 snoRNA and is associated with the 90S and 40S pre-ribosomes.

The protein resides in the nucleus. Its subcellular location is the nucleolus. It catalyses the reaction ATP + H2O = ADP + phosphate + H(+). Its function is as follows. ATP-dependent RNA helicase involved in 40S ribosomal subunit biogenesis. Required for the processing and cleavage of 35S pre-rRNA at sites A0, A1, and A2, leading to mature 18S rRNA. The polypeptide is ATP-dependent RNA helicase rok1 (drh-16) (Neurospora crassa (strain ATCC 24698 / 74-OR23-1A / CBS 708.71 / DSM 1257 / FGSC 987)).